Consider the following 497-residue polypeptide: Vacuolar-processing enzyme beta-isozyme 1 (497 aa).

Positions Met1–Gly23 are cleaved as a signal peptide. Asn153 is a glycosylation site (N-linked (GlcNAc...) asparagine). His180 is a catalytic residue. Cys222 serves as the catalytic Nucleophile. Cys255 and Cys269 are oxidised to a cystine. An N-linked (GlcNAc...) asparagine glycan is attached at Asn340. Disulfide bonds link Cys432-Cys462 and Cys444-Cys479.

The protein belongs to the peptidase C13 family. In terms of processing, auto-catalytic activation.

The protein resides in the protein storage vacuole. It carries out the reaction Hydrolysis of proteins and small molecule substrates at -Asn-|-Xaa- bonds.. Functionally, asparagine-specific endopeptidase that may be involved in processing of proteins targeted to vacuoles. Cysteine protease required for post-translational proteolysis of seed storage proteins in the protein storage vacuole (PSV) of developing seeds, by processing of proglutelin precursor to mature glutelin subunits, thus contributing to the formation of protein crystalline structures in PSV. This is Vacuolar-processing enzyme beta-isozyme 1 from Oryza sativa subsp. indica (Rice).